An 882-amino-acid polypeptide reads, in one-letter code: Alanine--tRNA ligase (882 aa).

Positions 574, 578, 682, and 686 each coordinate Zn(2+). Positions 853–882 (GGRGGGKGALAQGGGLDPRKAREALPGLLP) are disordered. Over residues 854–868 (GRGGGKGALAQGGGL) the composition is skewed to gly residues.

The protein belongs to the class-II aminoacyl-tRNA synthetase family. The cofactor is Zn(2+).

It localises to the cytoplasm. It carries out the reaction tRNA(Ala) + L-alanine + ATP = L-alanyl-tRNA(Ala) + AMP + diphosphate. Its function is as follows. Catalyzes the attachment of alanine to tRNA(Ala) in a two-step reaction: alanine is first activated by ATP to form Ala-AMP and then transferred to the acceptor end of tRNA(Ala). Also edits incorrectly charged Ser-tRNA(Ala) and Gly-tRNA(Ala) via its editing domain. In Thermus thermophilus (strain ATCC 27634 / DSM 579 / HB8), this protein is Alanine--tRNA ligase.